The following is a 137-amino-acid chain: Small ribosomal subunit protein bS6 (137 aa).

A disordered region spans residues 104 to 137 (SLVNKANNKPEPKPTKAKKEDVAPEAKEQAQTEA). The span at 111 to 137 (NKPEPKPTKAKKEDVAPEAKEQAQTEA) shows a compositional bias: basic and acidic residues.

The protein belongs to the bacterial ribosomal protein bS6 family.

In terms of biological role, binds together with bS18 to 16S ribosomal RNA. The protein is Small ribosomal subunit protein bS6 of Helicobacter hepaticus (strain ATCC 51449 / 3B1).